Here is a 524-residue protein sequence, read N- to C-terminus: tRNA-2-methylthio-N(6)-dimethylallyladenosine synthase (524 aa).

Residues 1–12 (MNTHPSHPDHPA) show a composition bias toward basic and acidic residues. A disordered region spans residues 1-23 (MNTHPSHPDHPADTLPARGNREG). The MTTase N-terminal domain occupies 27-143 (RTYEVRTFGC…LPTLLNRAEH (117 aa)). [4Fe-4S] cluster contacts are provided by cysteine 36, cysteine 72, cysteine 106, cysteine 180, cysteine 184, and cysteine 187. Residues 166 to 402 (RESAYAGWVS…MALQERICEE (237 aa)) enclose the Radical SAM core domain. One can recognise a TRAM domain in the interval 405-476 (QKFIGQTVEL…PFFLIADAGV (72 aa)).

The protein belongs to the methylthiotransferase family. MiaB subfamily. As to quaternary structure, monomer. [4Fe-4S] cluster is required as a cofactor.

It localises to the cytoplasm. It carries out the reaction N(6)-dimethylallyladenosine(37) in tRNA + (sulfur carrier)-SH + AH2 + 2 S-adenosyl-L-methionine = 2-methylsulfanyl-N(6)-dimethylallyladenosine(37) in tRNA + (sulfur carrier)-H + 5'-deoxyadenosine + L-methionine + A + S-adenosyl-L-homocysteine + 2 H(+). In terms of biological role, catalyzes the methylthiolation of N6-(dimethylallyl)adenosine (i(6)A), leading to the formation of 2-methylthio-N6-(dimethylallyl)adenosine (ms(2)i(6)A) at position 37 in tRNAs that read codons beginning with uridine. This Corynebacterium efficiens (strain DSM 44549 / YS-314 / AJ 12310 / JCM 11189 / NBRC 100395) protein is tRNA-2-methylthio-N(6)-dimethylallyladenosine synthase.